The primary structure comprises 857 residues: Leucine-rich repeat extensin-like protein 5 (857 aa).

Positions 1-31 (MKTKMMMKNTSLIFVLLFITFFFTSISYSLS) are cleaved as a signal peptide. The stretch at 32–53 (LTFNGDLSDNEVRLITQRQLLY) is one LRR 1 repeat. Asn98 carries N-linked (GlcNAc...) asparagine glycosylation. LRR repeat units lie at residues 125–149 (IRTV…LGLL), 150–172 (TDLA…RFNR), 174–197 (KLLF…VLQL), 198–221 (PSLK…LFSK), 223–244 (LDAI…LGDS), 246–267 (VSVI…LGDM), 268–291 (RNLE…IGRL), 292–315 (KNVT…IGGM), 316–339 (VSME…ICQL), and 341–362 (RLEN…CLGL). Residue Asn293 is glycosylated (N-linked (GlcNAc...) asparagine). A glycan (N-linked (GlcNAc...) asparagine) is linked at Asn344. Disordered regions lie at residues 406–776 (PPVV…EYSP) and 817–839 (YSPP…YEGP). Pro residues-rich tracts occupy residues 408–571 (VVVP…PTPI) and 579–768 (PIIP…PQSH). The segment at 615–857 (SPPPSTPTPV…YASPPPPPFY (243 aa)) is contains the Ser-Pro(4) repeats.

Hydroxylated on proline residues in the S-P-P-P-P repeat. In terms of processing, O-glycosylated on hydroxyprolines. Expressed in roots, leaves and flowers.

Its subcellular location is the secreted. It is found in the cell wall. Its function is as follows. Modulates cell morphogenesis by regulating cell wall formation and assembly, and/or growth polarization. The chain is Leucine-rich repeat extensin-like protein 5 (LRX5) from Arabidopsis thaliana (Mouse-ear cress).